The chain runs to 484 residues: tRNA sulfurtransferase (484 aa).

The THUMP domain maps to 63–167; the sequence is QAFGERLACI…RDKLYMVTKR (105 aa). Residues 185-186, Lys267, Gly289, and Gln298 contribute to the ATP site; that span reads LI. Cys346 and Cys458 form a disulfide bridge. Residues 406 to 484 enclose the Rhodanese domain; the sequence is IETNEVVIDI…GYTNVKVYRP (79 aa). Cys458 functions as the Cysteine persulfide intermediate in the catalytic mechanism.

Belongs to the ThiI family.

It is found in the cytoplasm. It carries out the reaction [ThiI sulfur-carrier protein]-S-sulfanyl-L-cysteine + a uridine in tRNA + 2 reduced [2Fe-2S]-[ferredoxin] + ATP + H(+) = [ThiI sulfur-carrier protein]-L-cysteine + a 4-thiouridine in tRNA + 2 oxidized [2Fe-2S]-[ferredoxin] + AMP + diphosphate. The enzyme catalyses [ThiS sulfur-carrier protein]-C-terminal Gly-Gly-AMP + S-sulfanyl-L-cysteinyl-[cysteine desulfurase] + AH2 = [ThiS sulfur-carrier protein]-C-terminal-Gly-aminoethanethioate + L-cysteinyl-[cysteine desulfurase] + A + AMP + 2 H(+). The protein operates within cofactor biosynthesis; thiamine diphosphate biosynthesis. In terms of biological role, catalyzes the ATP-dependent transfer of a sulfur to tRNA to produce 4-thiouridine in position 8 of tRNAs, which functions as a near-UV photosensor. Also catalyzes the transfer of sulfur to the sulfur carrier protein ThiS, forming ThiS-thiocarboxylate. This is a step in the synthesis of thiazole, in the thiamine biosynthesis pathway. The sulfur is donated as persulfide by IscS. In Shewanella putrefaciens (strain CN-32 / ATCC BAA-453), this protein is tRNA sulfurtransferase.